We begin with the raw amino-acid sequence, 302 residues long: Thioredoxin-like protein CDSP32, chloroplastic (302 aa).

A chloroplast-targeting transit peptide spans 1-56; the sequence is MATVANFLAKPISTVVPRPSSAVASTSSFVFFNHKTNPLFRRKNLPKRLFSAVKIK. In terms of domain architecture, Thioredoxin spans 163–298; that stretch reads HEEEGIEPDQ…IGEILRYSGV (136 aa). Active-site nucleophile residues include cysteine 219 and cysteine 222. Residues cysteine 219 and cysteine 222 are joined by a disulfide bond.

Belongs to the thioredoxin family. Interacts with the plastidial peroxiredoxin BAS1.

The protein resides in the plastid. It is found in the chloroplast stroma. Probable thiol-disulfide oxidoreductase involved in resistance to oxidative stress. May participate in the reduction of alkyl hydroperoxides derived from oxidative stress by acting as a physiological electron donor to the BAS1 peroxiredoxin. May regenerate methionine sulfoxide reductase B1 (MSRB1) activity through sulfenic acid reduction. The protein is Thioredoxin-like protein CDSP32, chloroplastic (CDSP32) of Arabidopsis thaliana (Mouse-ear cress).